A 142-amino-acid chain; its full sequence is Snaclec 2 (142 aa).

The signal sequence occupies residues 1–23; sequence MGRFIFVSFSLLVVFLSLSGTGA. A disulfide bridge links C25 with C36. In terms of domain architecture, C-type lectin spans 32–139; it reads YEGHCYRVFQ…CSETHNVICK (108 aa). N43 is a glycosylation site (N-linked (GlcNAc...) asparagine). Disulfide bonds link C53-C138 and C115-C130.

Belongs to the snaclec family. As to quaternary structure, heterodimer; disulfide-linked. In terms of tissue distribution, expressed by the venom gland.

The protein resides in the secreted. Interferes with one step of hemostasis (modulation of platelet aggregation, or coagulation cascade, for example). The sequence is that of Snaclec 2 from Sistrurus catenatus edwardsii (Desert massasauga).